The sequence spans 520 residues: Type I restriction enzyme EcoR124I/EcoR124II methylase subunit (520 aa).

Positions 10 to 190 are N-terminal domain; the sequence is AELHRQIWQI…YEFLISNYAA (181 aa). Residues 198 to 203, 230 to 232, and Glu254 each bind S-adenosyl-L-methionine; these read EFFTPQ and SGS. The catalytic domain stretch occupies residues 198–473; sequence EFFTPQHVSK…NDYNLSVSSY (276 aa). Residues 481–510 form a C-terminal tail region; it reads EIIDIAELNAELKTTVSKIDQLRKDIDAIV.

It belongs to the N(4)/N(6)-methyltransferase family. The type I restriction/modification system is composed of three polypeptides R, M and S; the restriction enzyme has stoichiometry R(2)M(2)S(1) while the methyltransferase is M(2)S(1). There is an equilibrium between R(2)M(2)S(1) and R(1)M(2)S(1); the latter is methylation and translocation proficient but restriction deficient. As to quaternary structure, (Microbial infection) Holoenenzyme interacts with Escherichia phage T7 protein Ocr; this interaction leads to the inhibition of the restriction activity, but may still allow methylation and translocation.

The enzyme catalyses a 2'-deoxyadenosine in DNA + S-adenosyl-L-methionine = an N(6)-methyl-2'-deoxyadenosine in DNA + S-adenosyl-L-homocysteine + H(+). Its function is as follows. The subtype gamma methyltransferase (M) subunit of a type I restriction enzyme. The M and S subunits together form a methyltransferase (MTase) that methylates A-3 on the top and bottom strand of the sequence 5'-GAAN(6)RTCG-3' (for EcoR124I) and 5'-GAAN(7)RTCG-3' (for EcoR124II). In the presence of the R subunit the complex can also act as an endonuclease, binding to the same target sequence but cutting the DNA some distance from this site. Whether the DNA is cut or modified depends on the methylation state of the target sequence. When the target site is unmodified, the DNA is cut. When the target site is hemimethylated, the complex acts as a maintenance MTase modifying the DNA so that both strands become methylated. After locating a non-methylated recognition site, the enzyme complex serves as a molecular motor that translocates DNA in an ATP-dependent manner until a collision occurs that triggers cleavage. The R(1)M(2)S(1) complex translocates an average of 555 bp/second on nicked DNA; the R(2)M(2)S(1) complex translocates at double that speed. The 2 R subunit motors are independent and track along the helical pitch of the DNA, inducing positive supercoiling ahead of themselves. This is Type I restriction enzyme EcoR124I/EcoR124II methylase subunit (hsdM) from Escherichia coli.